A 230-amino-acid chain; its full sequence is 2-C-methyl-D-erythritol 4-phosphate cytidylyltransferase (230 aa).

This sequence belongs to the IspD/TarI cytidylyltransferase family. IspD subfamily.

The catalysed reaction is 2-C-methyl-D-erythritol 4-phosphate + CTP + H(+) = 4-CDP-2-C-methyl-D-erythritol + diphosphate. The protein operates within isoprenoid biosynthesis; isopentenyl diphosphate biosynthesis via DXP pathway; isopentenyl diphosphate from 1-deoxy-D-xylulose 5-phosphate: step 2/6. Its function is as follows. Catalyzes the formation of 4-diphosphocytidyl-2-C-methyl-D-erythritol from CTP and 2-C-methyl-D-erythritol 4-phosphate (MEP). The chain is 2-C-methyl-D-erythritol 4-phosphate cytidylyltransferase from Synechocystis sp. (strain ATCC 27184 / PCC 6803 / Kazusa).